A 375-amino-acid polypeptide reads, in one-letter code: Actin-related protein T1 (375 aa).

This sequence belongs to the actin family.

It is found in the cytoplasm. Its subcellular location is the cytoskeleton. It localises to the nucleus. The protein localises to the cytoplasmic vesicle. The protein resides in the secretory vesicle. It is found in the acrosome. Its function is as follows. Negatively regulates the Hedgehog (SHH) signaling. Binds to the promoter of the SHH signaling mediator, GLI1, and inhibits its expression. This chain is Actin-related protein T1 (ACTRT1), found in Macaca fascicularis (Crab-eating macaque).